A 462-amino-acid chain; its full sequence is Sensor histidine kinase ZraS (462 aa).

The Cytoplasmic segment spans residues 1 to 14 (MNVMRLSKDSVAVG). The helical transmembrane segment at 15–35 (LSWLLTGLILLLVCLFSALIV) threads the bilayer. Residues 36–197 (RDYGRENEAA…ADHARGLRNM (162 aa)) are Periplasmic-facing. The helical transmembrane segment at 198–218 (VIMLCAAGVVMAATVLAQFWF) threads the bilayer. Residues 219-462 (RRYQRSRKQL…VNGQQKDEQG (244 aa)) lie on the Cytoplasmic side of the membrane. One can recognise a Histidine kinase domain in the interval 247-455 (GVAHEIRNPL…LFTFYLPVNG (209 aa)). H250 is modified (phosphohistidine; by autocatalysis).

In terms of processing, autophosphorylated.

The protein resides in the cell inner membrane. The enzyme catalyses ATP + protein L-histidine = ADP + protein N-phospho-L-histidine.. Its activity is regulated as follows. Activity of the ZraS/ZraR two-component system is repressed by the zinc-bound form of ZraP, which probably interacts with the periplasmic region of ZraS. Functionally, part of the Zra signaling pathway, an envelope stress response (ESR) system composed of the periplasmic accessory protein ZraP, the histidine kinase ZraS and the transcriptional regulator ZraR. The ZraPSR system contributes to antibiotic resistance and is important for membrane integrity in the presence of membrane-targeting biocides. ZraS is a member of the two-component regulatory system ZraS/ZraR. Functions as a membrane-associated sensor kinase that phosphorylates ZraR in response to high concentrations of Zn(2+) or Pb(2+) in the medium. The chain is Sensor histidine kinase ZraS (zraS) from Klebsiella oxytoca.